The following is a 379-amino-acid chain: Queuine tRNA-ribosyltransferase (379 aa).

Asp89 (proton acceptor) is an active-site residue. Substrate is bound by residues 89-93 (DSGGF), Asp143, Gln187, and Gly214. Positions 245–251 (GVGKPED) are RNA binding. Asp264 acts as the Nucleophile in catalysis. Residues 269-273 (TRNAR) are RNA binding; important for wobble base 34 recognition. The Zn(2+) site is built by Cys302, Cys304, Cys307, and His333.

The protein belongs to the queuine tRNA-ribosyltransferase family. Homodimer. Within each dimer, one monomer is responsible for RNA recognition and catalysis, while the other monomer binds to the replacement base PreQ1. Zn(2+) is required as a cofactor.

The enzyme catalyses 7-aminomethyl-7-carbaguanine + guanosine(34) in tRNA = 7-aminomethyl-7-carbaguanosine(34) in tRNA + guanine. It participates in tRNA modification; tRNA-queuosine biosynthesis. Functionally, catalyzes the base-exchange of a guanine (G) residue with the queuine precursor 7-aminomethyl-7-deazaguanine (PreQ1) at position 34 (anticodon wobble position) in tRNAs with GU(N) anticodons (tRNA-Asp, -Asn, -His and -Tyr). Catalysis occurs through a double-displacement mechanism. The nucleophile active site attacks the C1' of nucleotide 34 to detach the guanine base from the RNA, forming a covalent enzyme-RNA intermediate. The proton acceptor active site deprotonates the incoming PreQ1, allowing a nucleophilic attack on the C1' of the ribose to form the product. After dissociation, two additional enzymatic reactions on the tRNA convert PreQ1 to queuine (Q), resulting in the hypermodified nucleoside queuosine (7-(((4,5-cis-dihydroxy-2-cyclopenten-1-yl)amino)methyl)-7-deazaguanosine). This is Queuine tRNA-ribosyltransferase from Edwardsiella ictaluri (strain 93-146).